The primary structure comprises 541 residues: Atlastin-3 (541 aa).

The tract at residues 1–22 (MLSPQRTAAVASRGAGDAMENG) is disordered. Residues 1–25 (MLSPQRTAAVASRGAGDAMENGKPG) are N-terminal hypervariable region (HVR). Residues 1–445 (MLSPQRTAAV…NVFSTFRTPA (445 aa)) are Cytoplasmic-facing. The region spanning 57-306 (DLDVVVVSVA…LIPYVLNPSK (250 aa)) is the GB1/RHD3-type G domain. Residues arginine 70, lysine 71, glycine 72, lysine 73, serine 74, phenylalanine 75, and arginine 109 each coordinate GDP. A Mg(2+)-binding site is contributed by aspartate 142. Positions 213, 214, 272, and 275 each coordinate GDP. The 3HB (three-helix bundle) domain stretch occupies residues 344-434 (MLQATAANNL…YENFCKHNGS (91 aa)). N6-acetyllysine is present on lysine 391. A helical transmembrane segment spans residues 446–466 (VLFTGIAVLYIASGLTGFIGL). Glutamate 467 is a topological domain (lumenal). Residues 468–488 (VVAQLFNCMVGLLLIALLTWG) form a helical membrane-spanning segment. At 489–541 (YIRYSGQYLELGGAIDSGAAYVLEQASSHIGNSTQAAVRDAIAGRPPADKKSQ) the chain is on the cytoplasmic side.

It belongs to the TRAFAC class dynamin-like GTPase superfamily. GB1/RHD3 GTPase family. GB1 subfamily. In terms of assembly, monomeric and homodimeric. The homodimer, transiently formed by two molecules on opposing membranes, is the active form mediating ER membrane fusion. Interacts with ZFYVE27; both proteins are involved in endoplasmic reticulum tubular network organization. Interacts with REEP5; both proteins are involved in endoplasmic reticulum tubular network organization.

The protein resides in the endoplasmic reticulum membrane. The enzyme catalyses GTP + H2O = GDP + phosphate + H(+). In terms of biological role, atlastin-3 (ATL3) is a membrane-anchored GTPase that mediates the GTP-dependent fusion of endoplasmic reticulum (ER) membranes, maintaining the continuous ER network. It facilitates the formation of three-way junctions where ER tubules intersect. Two atlastin-3 on neighboring ER tubules bind GTP and form loose homodimers through the GB1/RHD3-type G domains and 3HB regions. Upon GTP hydrolysis, the 3HB regions tighten, pulling the membranes together to drive their fusion. After fusion, the homodimer disassembles upon release of inorganic phosphate (Pi). Subsequently, GDP dissociates, resetting the monomers to a conformation ready for a new fusion cycle. This is Atlastin-3 from Rattus norvegicus (Rat).